The chain runs to 481 residues: Matrix metalloproteinase-20 (481 aa).

Positions Met-1–Ala-20 are cleaved as a signal peptide. The propeptide occupies Ala-21 to Asn-105. The N-linked (GlcNAc...) asparagine glycan is linked to Asn-64. Residues Pro-96–Val-103 carry the Cysteine switch motif. Position 98 (Cys-98) interacts with Zn(2+). 3 residues coordinate Ca(2+): Glu-162, Ala-163, and Asp-164. Positions 174 and 176 each coordinate Zn(2+). Asp-181, Gly-182, Arg-184, and Thr-186 together coordinate Ca(2+). Zn(2+) is bound at residue His-189. 4 residues coordinate Ca(2+): Glu-195, Gly-196, Gly-198, and Asp-200. Zn(2+) is bound at residue His-202. Ca(2+) contacts are provided by Asp-204 and Glu-207. Zn(2+) is bound at residue His-224. Residue Glu-225 is part of the active site. Residues His-228 and His-234 each coordinate Zn(2+). Hemopexin repeat units lie at residues Pro-291–Leu-341, Met-342–Arg-387, Val-389–Val-437, and Asn-438–Cys-481. A disulfide bridge links Cys-294 with Cys-481. Asn-297 carries an N-linked (GlcNAc...) asparagine glycan.

It belongs to the peptidase M10A family. Zn(2+) is required as a cofactor. The cofactor is Ca(2+). Post-translationally, autoactivates at least at the 105-Asn-|-Tyr-106 site. As to expression, expressed in the enamel organ.

The protein localises to the secreted. Its subcellular location is the extracellular space. It is found in the extracellular matrix. Degrades amelogenin, the major protein component of the enamel matrix and two of the macromolecules characterizing the cartilage extracellular matrix: aggrecan and the cartilage oligomeric matrix protein (COMP). May play a central role in tooth enamel formation. Cleaves aggrecan at the '360-Ser-|-Phe-361' site. This chain is Matrix metalloproteinase-20 (MMP20), found in Bos taurus (Bovine).